A 389-amino-acid chain; its full sequence is Acetoin utilization protein AcuC (389 aa).

Belongs to the histone deacetylase family.

Its pathway is ketone degradation; acetoin degradation. Role in growth on acetoin or butanediol. Involved in the breakdown of these compounds used as a carbon source. This chain is Acetoin utilization protein AcuC (acuC), found in Staphylococcus aureus (strain MSSA476).